A 212-amino-acid polypeptide reads, in one-letter code: Pyridoxine/pyridoxamine 5'-phosphate oxidase (212 aa).

Substrate contacts are provided by residues 8–11 and K66; that span reads RTDY. FMN-binding positions include 61–66, 76–77, K83, and Q105; these read RIVLLK and FT. Substrate is bound by residues Y123, R127, and S131. FMN contacts are provided by residues 140–141 and W184; that span reads QS. Residue 190–192 participates in substrate binding; that stretch reads RLH. Residue R194 coordinates FMN.

It belongs to the pyridoxamine 5'-phosphate oxidase family. Homodimer. FMN serves as cofactor.

The catalysed reaction is pyridoxamine 5'-phosphate + O2 + H2O = pyridoxal 5'-phosphate + H2O2 + NH4(+). It carries out the reaction pyridoxine 5'-phosphate + O2 = pyridoxal 5'-phosphate + H2O2. The protein operates within cofactor metabolism; pyridoxal 5'-phosphate salvage; pyridoxal 5'-phosphate from pyridoxamine 5'-phosphate: step 1/1. It participates in cofactor metabolism; pyridoxal 5'-phosphate salvage; pyridoxal 5'-phosphate from pyridoxine 5'-phosphate: step 1/1. In terms of biological role, catalyzes the oxidation of either pyridoxine 5'-phosphate (PNP) or pyridoxamine 5'-phosphate (PMP) into pyridoxal 5'-phosphate (PLP). This is Pyridoxine/pyridoxamine 5'-phosphate oxidase from Ralstonia pickettii (strain 12J).